The primary structure comprises 64 residues: Conotoxin mr5.1a (64 aa).

An N-terminal signal peptide occupies residues 1–19 (MRCVPVFVILLLLIASAPS). Positions 20-48 (VDARLKTKDDMPLPSSHANIKRTLQIHRN) are excised as a propeptide. Position 60 is a 4-carboxyglutamate (E60).

The protein belongs to the conotoxin T superfamily. Post-translationally, contains 2 disulfide bonds that can be either 'C1-C3, C2-C4' or 'C1-C4, C2-C3', since these disulfide connectivities have been observed for conotoxins with cysteine framework V (for examples, see AC P0DQQ7 and AC P81755). As to expression, expressed by the venom duct.

It localises to the secreted. This is Conotoxin mr5.1a from Conus marmoreus (Marble cone).